Reading from the N-terminus, the 432-residue chain is Asparagine--tRNA ligase (432 aa).

Belongs to the class-II aminoacyl-tRNA synthetase family. As to quaternary structure, homodimer.

It is found in the cytoplasm. The catalysed reaction is tRNA(Asn) + L-asparagine + ATP = L-asparaginyl-tRNA(Asn) + AMP + diphosphate + H(+). The sequence is that of Asparagine--tRNA ligase from Lactobacillus delbrueckii subsp. bulgaricus (strain ATCC 11842 / DSM 20081 / BCRC 10696 / JCM 1002 / NBRC 13953 / NCIMB 11778 / NCTC 12712 / WDCM 00102 / Lb 14).